Consider the following 276-residue polypeptide: Large ribosomal subunit protein uL2 (276 aa).

2 disordered regions span residues 35-58 and 218-276; these read RKLS…GGGH and RPIT…KNRK. Residues 255-276 are compositionally biased toward basic residues; that stretch reads RRPKKASNKMIVRRRPNGKNRK.

The protein belongs to the universal ribosomal protein uL2 family. In terms of assembly, part of the 50S ribosomal subunit. Forms a bridge to the 30S subunit in the 70S ribosome.

Its function is as follows. One of the primary rRNA binding proteins. Required for association of the 30S and 50S subunits to form the 70S ribosome, for tRNA binding and peptide bond formation. It has been suggested to have peptidyltransferase activity; this is somewhat controversial. Makes several contacts with the 16S rRNA in the 70S ribosome. This is Large ribosomal subunit protein uL2 from Bifidobacterium adolescentis (strain ATCC 15703 / DSM 20083 / NCTC 11814 / E194a).